The primary structure comprises 637 residues: 1-deoxy-D-xylulose-5-phosphate synthase (637 aa).

Residues His-76 and 117-119 (GHS) contribute to the thiamine diphosphate site. Asp-148 contacts Mg(2+). Thiamine diphosphate-binding positions include 149-150 (GA), Asn-177, Tyr-294, and Glu-381. Position 177 (Asn-177) interacts with Mg(2+).

This sequence belongs to the transketolase family. DXPS subfamily. Homodimer. Mg(2+) is required as a cofactor. Thiamine diphosphate serves as cofactor.

The catalysed reaction is D-glyceraldehyde 3-phosphate + pyruvate + H(+) = 1-deoxy-D-xylulose 5-phosphate + CO2. It functions in the pathway metabolic intermediate biosynthesis; 1-deoxy-D-xylulose 5-phosphate biosynthesis; 1-deoxy-D-xylulose 5-phosphate from D-glyceraldehyde 3-phosphate and pyruvate: step 1/1. Catalyzes the acyloin condensation reaction between C atoms 2 and 3 of pyruvate and glyceraldehyde 3-phosphate to yield 1-deoxy-D-xylulose-5-phosphate (DXP). This chain is 1-deoxy-D-xylulose-5-phosphate synthase, found in Neisseria gonorrhoeae (strain NCCP11945).